Consider the following 71-residue polypeptide: Sodium channel neurotoxin MeuNaTxalpha-12 (71 aa).

The signal sequence occupies residues 1–6; sequence MTGVES. The LCN-type CS-alpha/beta domain maps to 8-70; it reads RDAYIAQGNN…VPIRIQGKCQ (63 aa). Disulfide bonds link cysteine 18–cysteine 69, cysteine 22–cysteine 42, cysteine 28–cysteine 52, and cysteine 32–cysteine 54. Residue arginine 71 is a propeptide, removed by a carboxypeptidase.

Belongs to the long (4 C-C) scorpion toxin superfamily. Sodium channel inhibitor family. Alpha subfamily. In terms of tissue distribution, expressed by the venom gland.

Its subcellular location is the secreted. In terms of biological role, alpha toxins bind voltage-independently at site-3 of sodium channels (Nav) and inhibit the inactivation of the activated channels, thereby blocking neuronal transmission. This Mesobuthus eupeus (Lesser Asian scorpion) protein is Sodium channel neurotoxin MeuNaTxalpha-12.